Reading from the N-terminus, the 132-residue chain is Chemokine-like protein TAFA-5 (132 aa).

Residues 1–43 (MAPSPRTSSRQDATALPSMSSTFWAFMILASLLIAYCSQLAAG) form the signal peptide. The N-linked (GlcNAc...) asparagine glycan is linked to N113.

This sequence belongs to the TAFA family. Expressed in the subcutaneous, brown, epididymal and perirenal adipose tissue (at protein level).

It is found in the secreted. Its function is as follows. Acts as a chemokine-like protein by regulating cell proliferation and migration through activation of G protein-coupled receptors (GPCRs), such as S1PR2 and FPR2. Stimulates chemotactic migration of macrophages mediated by the MAPK3/ERK1 and AKT1 pathway. Blocks TNFSF11/RANKL-induced osteoclast formation from macrophages by inhibiting up-regulation of osteoclast fusogenic and differentiation genes. Stimulation of macrophage migration and inhibition of osteoclast formation is mediated through the GPCR FPR2. Acts as an adipokine by negatively regulating vascular smooth muscle cell (VSMC) proliferation and migration in response to platelet-derived growth factor stimulation via GPCR S1PR2 and G protein GNA12/GNA13-transmitted RHOA signaling. Inhibits injury-induced cell proliferation and neointima formation in the femoral arteries. The sequence is that of Chemokine-like protein TAFA-5 (Tafa5) from Mus musculus (Mouse).